The following is a 507-amino-acid chain: Peroxisomal membrane protein PEX14 (507 aa).

Polar residues-rich tracts occupy residues 1 to 10 (MATHQQTQPP) and 32 to 48 (EVQQ…SVFK). Residues 1-52 (MATHQQTQPPSDFPALADENSQIPEATKPANEVQQATIAQDPPTSVFKNSEP) are disordered. Topologically, residues 1-152 (MATHQQTQPP…QAAFLSRFRW (152 aa)) are peroxisomal. Involved in interaction with PEX5 regions lie at residues 58 to 65 (IQNAIKFL) and 78 to 97 (RRSF…EAFR). A helical transmembrane segment spans residues 153–173 (YHAILAVGVLAASGAGTAVFI). Residues 174–507 (KRSLIPRFKS…EQQHISQEGN (334 aa)) are Cytoplasmic-facing. A compositionally biased stretch (polar residues) spans 288–302 (VTTARKPYTNGSNVD). 4 disordered regions span residues 288–329 (VTTA…PKSY), 344–394 (NIRE…NPRS), 409–435 (ANQN…QPPP), and 448–507 (PKPQ…QEGN). The span at 308–322 (ARSASPPAAPADSSA) shows a compositional bias: low complexity. The span at 378–394 (QDESSNGQWWQQKNPRS) shows a compositional bias: polar residues.

Belongs to the peroxin-14 family. As to quaternary structure, interacts with PEX13; forming the PEX13-PEX14 docking complex. Interacts with PEX5 (via WxxxF/Y motifs). In terms of tissue distribution, expressed in flowers, siliques, leaves and roots.

It is found in the peroxisome membrane. In terms of biological role, component of the PEX13-PEX14 docking complex, a translocon channel that specifically mediates the import of peroxisomal cargo proteins bound to PEX5 receptor. The PEX13-PEX14 docking complex forms a large import pore which can be opened to a diameter of about 9 nm. Mechanistically, PEX5 receptor along with cargo proteins associates with the PEX14 subunit of the PEX13-PEX14 docking complex in the cytosol, leading to the insertion of the receptor into the organelle membrane with the concomitant translocation of the cargo into the peroxisome matrix. This Arabidopsis thaliana (Mouse-ear cress) protein is Peroxisomal membrane protein PEX14.